The chain runs to 232 residues: Ubiquinone biosynthesis O-methyltransferase (232 aa).

Residues R36, G55, D76, and L120 each contribute to the S-adenosyl-L-methionine site.

It belongs to the methyltransferase superfamily. UbiG/COQ3 family.

It carries out the reaction a 3-demethylubiquinol + S-adenosyl-L-methionine = a ubiquinol + S-adenosyl-L-homocysteine + H(+). The catalysed reaction is a 3-(all-trans-polyprenyl)benzene-1,2-diol + S-adenosyl-L-methionine = a 2-methoxy-6-(all-trans-polyprenyl)phenol + S-adenosyl-L-homocysteine + H(+). Its pathway is cofactor biosynthesis; ubiquinone biosynthesis. In terms of biological role, O-methyltransferase that catalyzes the 2 O-methylation steps in the ubiquinone biosynthetic pathway. This chain is Ubiquinone biosynthesis O-methyltransferase, found in Pseudomonas paraeruginosa (strain DSM 24068 / PA7) (Pseudomonas aeruginosa (strain PA7)).